The following is a 72-amino-acid chain: Translation initiation factor IF-1 (72 aa).

Residues 1–72 (MAKEELLEFP…TKGRINYRFK (72 aa)) enclose the S1-like domain.

Belongs to the IF-1 family. In terms of assembly, component of the 30S ribosomal translation pre-initiation complex which assembles on the 30S ribosome in the order IF-2 and IF-3, IF-1 and N-formylmethionyl-tRNA(fMet); mRNA recruitment can occur at any time during PIC assembly.

The protein resides in the cytoplasm. In terms of biological role, one of the essential components for the initiation of protein synthesis. Stabilizes the binding of IF-2 and IF-3 on the 30S subunit to which N-formylmethionyl-tRNA(fMet) subsequently binds. Helps modulate mRNA selection, yielding the 30S pre-initiation complex (PIC). Upon addition of the 50S ribosomal subunit IF-1, IF-2 and IF-3 are released leaving the mature 70S translation initiation complex. This is Translation initiation factor IF-1 from Dinoroseobacter shibae (strain DSM 16493 / NCIMB 14021 / DFL 12).